Consider the following 224-residue polypeptide: Deoxyribose-phosphate aldolase (224 aa).

D92 functions as the Proton donor/acceptor in the catalytic mechanism. K155 functions as the Schiff-base intermediate with acetaldehyde in the catalytic mechanism. K184 (proton donor/acceptor) is an active-site residue.

This sequence belongs to the DeoC/FbaB aldolase family. DeoC type 1 subfamily.

The protein localises to the cytoplasm. The catalysed reaction is 2-deoxy-D-ribose 5-phosphate = D-glyceraldehyde 3-phosphate + acetaldehyde. It functions in the pathway carbohydrate degradation; 2-deoxy-D-ribose 1-phosphate degradation; D-glyceraldehyde 3-phosphate and acetaldehyde from 2-deoxy-alpha-D-ribose 1-phosphate: step 2/2. In terms of biological role, catalyzes a reversible aldol reaction between acetaldehyde and D-glyceraldehyde 3-phosphate to generate 2-deoxy-D-ribose 5-phosphate. In Clostridium perfringens (strain ATCC 13124 / DSM 756 / JCM 1290 / NCIMB 6125 / NCTC 8237 / Type A), this protein is Deoxyribose-phosphate aldolase.